We begin with the raw amino-acid sequence, 621 residues long: F-box/LRR-repeat protein 4 (621 aa).

At Arg28 the chain carries Asymmetric dimethylarginine. In terms of domain architecture, F-box spans 277–332; it reads NGYFDKLPYELIQLILNHLTLPDLCRLAQTCKLLNQHCCDPLQYIHLNLQPYWAKL. LRR repeat units lie at residues 376-397, 402-421, 427-448, 452-474, 480-501, 504-524, 532-558, 559-583, and 584-609; these read ELVRLELSCSHFLNETCLEIIS, NLQDLNLSSCDKLPPQAFSH, GLKRLVLYRTKVEQTALLSILN, DLQHLSLGSCVMIEDYDVTASMI, KLRTLDLWRCKNITESGIAELA, CPLLEELDLGWCPTLQSSTGC, LPNLQKLFLTANRSVCDTDIEELASNC, TRLRQLDILGTRMVSPASLRKLLES, and CKDLSLLDVSFCSQIDNRAVLELSAS.

In terms of assembly, part of a SCF (SKP1-CUL1-F-box) protein ligase complex. Interacts with FAF2 and VCP. Interacts with PPTC7; this interaction promotes destruction of BNIP3 and NIX and mitophagy suppression.

The protein localises to the cytoplasm. It is found in the nucleus. Its subcellular location is the mitochondrion outer membrane. In terms of biological role, substrate-recognition component of the mitochondria-localized SCF-FBXL4 ubiquitin E3 ligase complex that plays a role in the restriction of mitophagy by controlling the degradation of BNIP3 and NIX mitophagy receptors. Also rescues mitochondrial injury through reverting hyperactivation of DRP1-mediated mitochondrial fission. This Bos taurus (Bovine) protein is F-box/LRR-repeat protein 4 (FBXL4).